The sequence spans 201 residues: Small ribosomal subunit protein uS4c (201 aa).

The tract at residues 15 to 43 (LGALPGLTNKRPRAGSDLRNQSRSGKKSQ) is disordered. The S4 RNA-binding domain maps to 89-152 (MRLDNILFRL…NSRTLIQNSL (64 aa)).

The protein belongs to the universal ribosomal protein uS4 family. Part of the 30S ribosomal subunit. Contacts protein S5. The interaction surface between S4 and S5 is involved in control of translational fidelity.

It localises to the plastid. Its subcellular location is the chloroplast. One of the primary rRNA binding proteins, it binds directly to 16S rRNA where it nucleates assembly of the body of the 30S subunit. In terms of biological role, with S5 and S12 plays an important role in translational accuracy. This chain is Small ribosomal subunit protein uS4c (rps4), found in Panax ginseng (Korean ginseng).